The primary structure comprises 281 residues: Pantothenate synthetase (281 aa).

30–37 (MGNLHQGH) lines the ATP pocket. His37 serves as the catalytic Proton donor. Position 61 (Gln61) interacts with (R)-pantoate. Beta-alanine is bound at residue Gln61. Residue 149–152 (GNKD) coordinates ATP. Gln155 contacts (R)-pantoate. Residues Ile178 and 186-189 (MSSR) each bind ATP.

This sequence belongs to the pantothenate synthetase family. As to quaternary structure, homodimer.

The protein localises to the cytoplasm. It carries out the reaction (R)-pantoate + beta-alanine + ATP = (R)-pantothenate + AMP + diphosphate + H(+). The protein operates within cofactor biosynthesis; (R)-pantothenate biosynthesis; (R)-pantothenate from (R)-pantoate and beta-alanine: step 1/1. Its function is as follows. Catalyzes the condensation of pantoate with beta-alanine in an ATP-dependent reaction via a pantoyl-adenylate intermediate. The polypeptide is Pantothenate synthetase (Shewanella baltica (strain OS223)).